A 36-amino-acid chain; its full sequence is Photosystem I reaction center subunit VIII (36 aa).

A helical transmembrane segment spans residues 9–29; sequence ILVPLVGLIFPAIAMTSLFIY.

The protein belongs to the PsaI family.

It localises to the plastid. The protein localises to the chloroplast thylakoid membrane. May help in the organization of the PsaL subunit. This Tupiella akineta (Green alga) protein is Photosystem I reaction center subunit VIII.